The following is a 307-amino-acid chain: Sporulation sigma-E factor-processing peptidase (307 aa).

A run of 5 helical transmembrane segments spans residues 7-27 (LIWM…AVVL), 36-56 (LLLG…PFSH), 57-77 (LMVH…MTFG), 89-109 (LTFY…HFLF), and 127-147 (FGDP…SYFS). The active site involves Asp-183.

Belongs to the peptidase U4 family. As to quaternary structure, self-associates. Interacts with SigE. Interacts with SpoIIR.

Its subcellular location is the cell membrane. Probable aspartic protease that is responsible for the proteolytic cleavage of the RNA polymerase sigma E factor (SigE/spoIIGB) to yield the active peptide in the mother cell during sporulation. Responds to a signal from the forespore that is triggered by the extracellular signal protein SpoIIR. In Priestia megaterium (strain ATCC 12872 / QMB1551) (Bacillus megaterium), this protein is Sporulation sigma-E factor-processing peptidase.